The primary structure comprises 1181 residues: MDHPEDESHSEKQDDEEALARLEEIKKSIEAKLTLRQNNLNPERPDSAYLRTLDSSIKRNTAVIKKLKQINEEQREGLMDDLRGVNLSKFVSEAVTAICEAKLKSSDIQAAVQICSLLHQRYKEFSASLTQGLLKVFFPGKSAEDLEADKNSKAMKKRSTLKLLLELYYVGVIEDSNIFINIIKDLTSVEQLKDRDTTQTNLTLLTSFARQGRIFLGLPISGQDEDFFKGLDVTADQKKSFKKAFNTYYDALADLLQSEHKLLLQMEKENAKLVNAKGELSEDSASSYEKLRKSYDHLYRNISSLAEALDMQPPVMPEDGTTRLTAGDEASPSGTVKDTSVPEPIWDDEDTKTFYECLPDLRAFVPAVLLGEAEPKSNEQSAKAKEKLSESSSEVVENQQTTEDTTEVSADSASMDDRSNAEQPKEKEEVEKEKAKDTKKEKGKEKDSEKKMEHEKEKGKSLDVANFERLLQRLPGCVSRDLIDQLTVEYCYLNSKTNRKKLVKALFNVPRTSLELLAYYSRMVATLASCMKDIPSMLVQMLEDEFNSLVHKKDQMNIETKIRNIRFIGELCKFKIVPAGLVFSCLKACLDEFTHHNIDVACNLLETCGRFLYRSPETTLRMTNMLDILMRLKNVKNLDPRQSTLVENAYYLCKPPERSARISKVRPPLHQYVRKLLFSDLDKDSIANVLKQLRKLPWSECEQYILKCFMKVHKGKYGQIHLIASLTSGLSRHHDEFVVAVVDEVLEEIRVGLELNEYGAQQKRLAHMRFLGELYNYEHVDSSVIFETLYLTLLYGHDTSEQEVLDPPEDFFRVRMVIILLETCGHYFDRGSSKKRLDQFLIHFQRYILSKGHLPLDIEFDLQDLFANLRPNMTRYSTIDEVNAAILQLEEREHASSGDKVSIERHSDTKPSNKSSSDVISSNGKSTAKDIRENGEAHGEESDSDSGSGSVVRDGQNEELDDGNHERGSESGDGDDYDDGDGPGSDDDKFRVRQKVVTVDLEEQADFDQELKALLQESMEQRKLELRGRPALNMTIPMSVFEGSGKDHHHFGRVVGENGEEVLDEENGEQREVQVKVLVKRGNKQQTRQMLIPSDCALVQSTKQKEAAELEEKQDIKRLVLEYNERDEEEANGLGTQILNWTSGGSRGSTRTGEGSGKSGGSRHRFYYHQGGGGSYHARRK.

Coiled coils occupy residues Asp6–Asn41 and His260–Leu309. Residues Thr61 to Leu264 form the MIF4G 1 domain. Disordered stretches follow at residues Leu309–Asp348 and Pro375–Gly459. Residues Pro375–Ser389 show a composition bias toward basic and acidic residues. The segment covering Asn398–Ser412 has biased composition (polar residues). Residues Met415–Gly459 show a composition bias toward basic and acidic residues. Coiled-coil stretches lie at residues Lys425 to Lys451 and Val539 to Glu559. MIF4G domains lie at Arg469–Pro655 and Tyr672–Pro871. A binds to UPF3 region spans residues Asp735–Leu755. A compositionally biased stretch (basic and acidic residues) spans Glu893–Pro911. Residues Glu893–Arg991 are disordered. Residues Ser912–Ser926 show a composition bias toward low complexity. A compositionally biased stretch (basic and acidic residues) spans Thr927–Glu941. Residues Gly972–Ser985 are compositionally biased toward acidic residues. Residues Asp981 to Lys1181 are sufficient for interaction with UPF1 C-terminus. Interaction with UPF1 stretches follow at residues Val999–Lys1023 and Glu1066–Glu1111. A necessary for interaction with UPF1 region spans residues Val999–Thr1102. The stretch at Asp1000 to Gln1021 forms a coiled coil. A disordered region spans residues Glu1129–Lys1181. Low complexity predominate over residues Thr1142 to Gly1153.

It belongs to the RENT2 family. As to quaternary structure, found in a post-splicing messenger ribonucleoprotein (mRNP) complex. Associates with the exon junction complex (EJC). Interacts with UPF1 and UPF3.

The protein localises to the nucleus. It localises to the nucleolus. The protein resides in the cytoplasm. It is found in the perinuclear region. Functionally, recruited by UPF3 associated with the EJC core at the cytoplasmic side of the nuclear envelope and the subsequent formation of an UPF1-UPF2-UPF3 surveillance complex (including UPF1 bound to release factors at the stalled ribosome) is believed to activate NMD. In cooperation with UPF3 stimulates both ATPase and RNA helicase activities of UPF1. Binds spliced mRNA. Involved in nonsense-mediated decay (NMD) of mRNAs containing premature stop codons by associating with the nuclear exon junction complex (EJC). Required for plant development and adaptation to environmental stresses, including plant defense and response to wounding. This is Regulator of nonsense transcripts UPF2 (UPF2) from Arabidopsis thaliana (Mouse-ear cress).